The sequence spans 1231 residues: RNA-binding protein 33 (1231 aa).

Residues 1–13 (MAAALGAGGGAGA) are compositionally biased toward gly residues. Disordered regions lie at residues 1–168 (MAAA…EEEQ) and 219–261 (SQVA…FKTE). At Ala2 the chain carries N-acetylalanine. The span at 20–36 (QFDKPGAERSWRRRAAD) shows a compositional bias: basic and acidic residues. The span at 37–49 (EDWDSELEDDLLG) shows a compositional bias: acidic residues. Ser41 bears the Phosphoserine mark. Residues 82 to 108 (FSSQGVTISLNTTSGIVTSFELSDNTN) show a composition bias toward polar residues. Composition is skewed to acidic residues over residues 112-124 (GEQE…GDDE) and 153-168 (LTED…EEEQ). Residues 224–240 (ETHEGGMETLELQKDIK) show a composition bias toward basic and acidic residues. Residues 241 to 252 (EESDEEDDDDEE) show a composition bias toward acidic residues. Ser243 and Ser271 each carry phosphoserine. Disordered stretches follow at residues 297–436 (FEER…KNIH) and 452–761 (PLLP…NLRE). Over residues 305–316 (KQGRYGSRRGGR) the composition is skewed to basic residues. The segment covering 327–344 (GDQRRDNSERGRMKEHRP) has biased composition (basic and acidic residues). Positions 360–379 (LIPPPQPQPPPPPPPPPPQQ) are enriched in pro residues. The segment covering 380–398 (QPIRSLFQQQQLQPLLPLQ) has biased composition (low complexity). Residues 469–483 (FPGPPEFPQHTPGPV) are compositionally biased toward pro residues. Arg520 carries the post-translational modification Asymmetric dimethylarginine. Pro residues-rich tracts occupy residues 531 to 540 (SPPPPPPPPT), 604 to 618 (FIPP…PGQP), 632 to 647 (LHPP…PQPQ), and 661 to 682 (PLQP…PPQH). 2 stretches are compositionally biased toward polar residues: residues 713–728 (QTAQ…QCTP) and 736–759 (AASQ…NSNL). Residues Ser792 and Ser816 each carry the phosphoserine modification. 3 disordered regions span residues 796–840 (RAVV…ETRL), 876–932 (ERLA…FPGA), and 998–1080 (ETPH…MRQQ). Basic and acidic residues predominate over residues 820–829 (QPKEEAKPEA). Residues 840-891 (LYRLKIEEQKRLREEILKQKELRRQQQAGARKKELLERLAQQQQQQQQQQHQ) adopt a coiled-coil conformation. Residues 880–901 (QQQQQQQQQQHQPQQQQQQPQQ) show a composition bias toward low complexity. Ser1002 and Ser1010 each carry phosphoserine. A Glycyl lysine isopeptide (Lys-Gly) (interchain with G-Cter in SUMO2) cross-link involves residue Lys1019. 2 positions are modified to phosphoserine: Ser1032 and Ser1051.

Associates with the NXF1-NXT1 RNA export complex. Interacts with ALKBH5; facilitating ALKBH5 recruitment to m6A-containing transcripts. Interacts with SENP1; promoting ALKBH5 deSUMOylation and subsequent activation.

The protein resides in the nucleus. It is found in the cytoplasm. Its function is as follows. RNA reader protein, which recognizes and binds specific RNAs, thereby regulating RNA metabolic processes, such as mRNA export, mRNA stability and/or translation. Binds a subset of intronless RNAs containing GC-rich elements, such as NORAD, and promotes their nuclear export by recruiting target RNAs to components of the NXF1-NXT1 RNA export machinery. Specifically recognizes and binds N6-methyladenosine (m6A)-containing mRNAs, promoting their demethylation by ALKBH5. Acts as an molecular adapter, which (1) promotes ALKBH5 recruitment to m6A-containing transcripts and (2) activates ALKBH5 demethylase activity by recruiting SENP1, leading to ALKBH5 deSUMOylation and subsequent activation. The polypeptide is RNA-binding protein 33 (Mus musculus (Mouse)).